The chain runs to 3291 residues: Protocadherin-16 (3291 aa).

Positions 1-35 (MQEELSVALSCPGMKSLGTLLPLLVLLGTTVPGIR) are cleaved as a signal peptide. The Extracellular portion of the chain corresponds to 36 to 2933 (GQAGSLDLQI…PDLNLLLVGA (2898 aa)). Cadherin domains lie at 37–137 (QAGS…APAF), 138–249 (PQAR…APAF), 250–356 (NQSR…QPSM), 369–466 (VSEA…APAF), 476–572 (LPEV…EPQF), 573–679 (QRTF…PPQF), 680–784 (YPRE…PPIF), 785–888 (EQLQ…SPAF), 889–994 (PAPE…APRF), 995–1105 (DSPT…EPTF), 1100–1205 (SEEP…SPTF), 1218–1317 (IQVP…SPDL), 1326–1429 (VPVV…APAF), 1430–1539 (ARDP…APVF), 1539–1642 (FASP…APAF), 1643–1744 (PQQE…SPTF), 1745–1848 (GNTH…APAF), 1849–1953 (PVPS…APAF), 1976–2061 (LATL…GPRF), 2062–2164 (PRAN…APRF), 2165–2270 (LQPH…RPTI), 2270–2369 (IPQP…VPIF), 2370–2475 (SQSL…APSF), 2476–2595 (TLPH…PPVF), 2596–2699 (TRAS…GPAF), 2700–2806 (PLSL…DPVF), and 2807–2926 (LAPS…APDL). Residue N396 is glycosylated (N-linked (GlcNAc...) asparagine). Residues 951-971 (GPPGGPPHELEVEAQDGGSPP) form a disordered region. N-linked (GlcNAc...) asparagine glycosylation is present at N1711. N2354 is a glycosylation site (N-linked (GlcNAc...) asparagine). N-linked (GlcNAc...) asparagine glycosylation occurs at N2562. A helical membrane pass occupies residues 2934–2954 (VAASLGVVVVLALAALVLGLV). Residues 2955 to 3291 (RARSRKAEAA…EPPDDTELRI (337 aa)) are Cytoplasmic-facing. The interval 2978 to 3033 (SLQKLGREPPSPPPSEHLYHQTLPSYGGPGAGGPYPRGGSLDPSHSSGRGSAEAAE) is disordered. A compositionally biased stretch (gly residues) spans 3004–3013 (GGPGAGGPYP). Position 3048 is a phosphoserine (S3048). Disordered stretches follow at residues 3051-3080 (SSLA…PAPD) and 3226-3291 (ASHR…ELRI). Positions 3237–3259 (SLSSAAMSPSFSPSLSPLAARSP) are enriched in low complexity. The segment covering 3270–3279 (PSASALSTES) has biased composition (polar residues).

Heterophilic interaction with FAT4; this interaction affects their respective protein levels.

The protein localises to the cell membrane. In terms of biological role, calcium-dependent cell-adhesion protein. Mediates functions in neuroprogenitor cell proliferation and differentiation. This Rattus norvegicus (Rat) protein is Protocadherin-16 (Dchs1).